The sequence spans 748 residues: Putative pre-mRNA-splicing factor ATP-dependent RNA helicase DHX32 (748 aa).

One can recognise a Helicase ATP-binding domain in the interval 74 to 240 (LEHLAHNQIV…YGNAPLVEAE (167 aa)). 87-94 (AGPKSGKS) serves as a coordination point for ATP. One can recognise a Helicase C-terminal domain in the interval 263–439 (RLLFEIHHTK…SMVLFLKRMD (177 aa)). Positions 706 to 748 (SETKDLLQQDQTPDTPPTEEPREEEPLHEANDEGTAEQRCIIQ) are disordered.

This sequence belongs to the DEAD box helicase family. DEAH subfamily.

Its subcellular location is the nucleus. The protein localises to the mitochondrion. The catalysed reaction is ATP + H2O = ADP + phosphate + H(+). The protein is Putative pre-mRNA-splicing factor ATP-dependent RNA helicase DHX32 (dhx32) of Xenopus laevis (African clawed frog).